The chain runs to 317 residues: Melanocyte-stimulating hormone receptor (317 aa).

Topologically, residues 1–37 (MPLQGPQRRLLGSLNSTLPATPYLGLTTNQTEPPCLE) are extracellular. Residue Asn-29 is glycosylated (N-linked (GlcNAc...) asparagine). The chain crosses the membrane as a helical span at residues 38-63 (VSIPDGLFLSLGLVSLVENVLVVTAI). Over 64-72 (AKNRNLHSP) the chain is Cytoplasmic. The chain crosses the membrane as a helical span at residues 73–93 (MYYFICCLAVSDLLVSMSNVL). At 94–118 (EMAILLLLEAGVLATQASVLQQLDN) the chain is on the extracellular side. A helical transmembrane segment spans residues 119 to 140 (IIDVLICGSMVSSLCFLGSIAV). Residues 141–163 (DRYISIFYALRYHSIMMLPRVWR) are Cytoplasmic-facing. The chain crosses the membrane as a helical span at residues 164-183 (AIVAIWVVSVLSSTLFIAYY). The Extracellular portion of the chain corresponds to 184–191 (NHTAVLLC). A helical transmembrane segment spans residues 192 to 211 (LVTFFVAMLVLMAVLYVHML). The Cytoplasmic portion of the chain corresponds to 212–240 (ARACQHARGIARLHKRQHPIHQGFGLKGA). A helical transmembrane segment spans residues 241-266 (ATLTILLGVFFLCWGPFFLHLSLLIL). The Extracellular segment spans residues 267-279 (CPQHPTCGCVFKN). Residues 280–300 (FKLFLTLILCSAIVDPLIYAF) form a helical membrane-spanning segment. At 301–317 (RSQELRKTLQEVLLCSW) the chain is on the cytoplasmic side. The S-palmitoyl cysteine moiety is linked to residue Cys-315.

The protein belongs to the G-protein coupled receptor 1 family. As to quaternary structure, interacts with MGRN1, but does not undergo MGRN1-mediated ubiquitination; this interaction competes with GNAS-binding and thus inhibits agonist-induced cAMP production. Interacts with OPN3; the interaction results in a decrease in MC1R-mediated cAMP signaling and ultimately a decrease in melanin production in melanocytes.

It localises to the cell membrane. Receptor for MSH (alpha, beta and gamma) and ACTH. The activity of this receptor is mediated by G proteins which activate adenylate cyclase. Mediates melanogenesis, the production of eumelanin (black/brown) and phaeomelanin (red/yellow), via regulation of cAMP signaling in melanocytes. The chain is Melanocyte-stimulating hormone receptor (MC1R) from Equus caballus (Horse).